Here is a 214-residue protein sequence, read N- to C-terminus: Holliday junction branch migration complex subunit RuvA (214 aa).

Residues 1-63 are domain I; it reads MISFLRGTVA…EDSLTLFGFS (63 aa). Positions 64-142 are domain II; that stretch reads SDDEREVFDV…PHGTGAAAAP (79 aa). Residues 143-153 are flexible linker; the sequence is AAAASAPWKPQ. The domain III stretch occupies residues 153–214; it reads QVVAAMTSLG…RAGNRVGSRG (62 aa).

It belongs to the RuvA family. As to quaternary structure, homotetramer. Forms an RuvA(8)-RuvB(12)-Holliday junction (HJ) complex. HJ DNA is sandwiched between 2 RuvA tetramers; dsDNA enters through RuvA and exits via RuvB. An RuvB hexamer assembles on each DNA strand where it exits the tetramer. Each RuvB hexamer is contacted by two RuvA subunits (via domain III) on 2 adjacent RuvB subunits; this complex drives branch migration. In the full resolvosome a probable DNA-RuvA(4)-RuvB(12)-RuvC(2) complex forms which resolves the HJ.

Its subcellular location is the cytoplasm. Functionally, the RuvA-RuvB-RuvC complex processes Holliday junction (HJ) DNA during genetic recombination and DNA repair, while the RuvA-RuvB complex plays an important role in the rescue of blocked DNA replication forks via replication fork reversal (RFR). RuvA specifically binds to HJ cruciform DNA, conferring on it an open structure. The RuvB hexamer acts as an ATP-dependent pump, pulling dsDNA into and through the RuvAB complex. HJ branch migration allows RuvC to scan DNA until it finds its consensus sequence, where it cleaves and resolves the cruciform DNA. This chain is Holliday junction branch migration complex subunit RuvA, found in Arthrobacter sp. (strain FB24).